Consider the following 274-residue polypeptide: Large ribosomal subunit protein uL2cz/uL2cy (274 aa).

Disordered regions lie at residues 1-21 (MAIHLYKTSTPSTRNGAVDSQ) and 224-274 (NPVD…RRSK).

Belongs to the universal ribosomal protein uL2 family. In terms of assembly, part of the 50S ribosomal subunit.

It is found in the plastid. It localises to the chloroplast. The polypeptide is Large ribosomal subunit protein uL2cz/uL2cy (rpl2-A) (Populus trichocarpa (Western balsam poplar)).